Consider the following 114-residue polypeptide: RNA polymerase-binding protein RbpA (114 aa).

The protein belongs to the RNA polymerase-binding protein RbpA family. Monomer. Forms a complex with the RNAP catalytic core, specifically with the beta subunit (RpoB); its binding site may overlap with that of Rif. May bind free principal sigma factors.

Its function is as follows. Binds to RNA polymerase (RNAP), probably stimulating transcriptions from principal, but not alternative sigma factor promoters. Partially restores transcription in the presence of rifampicin (Rif) in vitro; overexpression leads to an increase in the Rif tolerance in vivo, with smaller colonies. Seems to act by removing Rif from its binding site and preventing its further binding. No longer stimulates transcription in Rif-resistant RNA polymerase (with mutations in rpoB). The chain is RNA polymerase-binding protein RbpA from Mycolicibacterium smegmatis (strain ATCC 700084 / mc(2)155) (Mycobacterium smegmatis).